Here is an 81-residue protein sequence, read N- to C-terminus: uncharacterized protein (81 aa).

It to Synechocystis PCC 6803 ssr2439.

In terms of biological role, may have a regulatory function. This is an uncharacterized protein from Synechococcus elongatus (strain ATCC 33912 / PCC 7942 / FACHB-805) (Anacystis nidulans R2).